The following is a 210-amino-acid chain: Thymidylate kinase (210 aa).

9-16 is a binding site for ATP; sequence GLEGAGKS.

This sequence belongs to the thymidylate kinase family.

It carries out the reaction dTMP + ATP = dTDP + ADP. Its function is as follows. Phosphorylation of dTMP to form dTDP in both de novo and salvage pathways of dTTP synthesis. The polypeptide is Thymidylate kinase (Aliivibrio fischeri (strain ATCC 700601 / ES114) (Vibrio fischeri)).